Reading from the N-terminus, the 527-residue chain is Sensory neuron membrane protein 1 (527 aa).

Residues 1 to 10 (MQLQKPLKIG) are Cytoplasmic-facing. Residues 11–31 (LGMMGAGLFGIIFGWVLFPVI) form a helical membrane-spanning segment. Over 32–456 (LKSQLKKEMA…LKNQLFIPKR (425 aa)) the chain is Extracellular. Residues Asn67 and Asn229 are each glycosylated (N-linked (GlcNAc...) asparagine). Cystine bridges form between Cys268-Cys333, Cys297-Cys352, and Cys335-Cys341. Asn440 is a glycosylation site (N-linked (GlcNAc...) asparagine). The helical transmembrane segment at 457-477 (IVSVVKWLLAGVGFVGLVGSL) threads the bilayer. Residues 478 to 527 (VYQFKGKMINFALSPSSAPVTKVNPEINQQNQPKDISIIGESQNPPKVDM) are Cytoplasmic-facing.

It belongs to the CD36 family. In terms of tissue distribution, principal component of the olfactory cilia membrane. Localizes to the antennal tissue with two to three fold higher expression in males compared to females.

Its subcellular location is the cell membrane. Functionally, plays an olfactory role that is not restricted to pheromone sensitivity. The sequence is that of Sensory neuron membrane protein 1 from Ostrinia nubilalis (European corn borer).